The primary structure comprises 681 residues: Nucleolar GTP-binding protein 1 (681 aa).

Positions 170-341 (RTLILCGFPN…LRDRACDELL (172 aa)) constitute an OBG-type G domain. Residues 176-183 (GFPNVGKS), 222-226 (DTPGI), and 290-293 (NKVD) contribute to the GTP site.

The protein belongs to the TRAFAC class OBG-HflX-like GTPase superfamily. OBG GTPase family. NOG subfamily. As to expression, ubiquitously expressed.

The protein resides in the nucleus. It localises to the nucleolus. Its function is as follows. Involved in the biogenesis of the 60S ribosomal subunit. Has a role in regulating longevity, growth and brood size. May regulate fat storage via the insulin/IGF pathway. This Caenorhabditis elegans protein is Nucleolar GTP-binding protein 1.